The primary structure comprises 349 residues: Protein FAM98C (349 aa).

The tract at residues 313 to 349 (PDRGGRPNELEPPMPTWRSRREDGGPQCWGRKKKKKK) is disordered.

The protein belongs to the FAM98 family.

The polypeptide is Protein FAM98C (FAM98C) (Homo sapiens (Human)).